Consider the following 146-residue polypeptide: Large ribosomal subunit protein uL15 (146 aa).

Residues 1 to 54 (MKLHELKPAAGSRKAPKRVGRGTGSGLGRNAGKGEKGQNARSGGGVRPGFEGGQ) are disordered. Gly residues-rich tracts occupy residues 21 to 31 (RGTGSGLGRNA) and 42 to 52 (SGGGVRPGFEG).

It belongs to the universal ribosomal protein uL15 family. In terms of assembly, part of the 50S ribosomal subunit.

Functionally, binds to the 23S rRNA. In Clostridium acetobutylicum (strain ATCC 824 / DSM 792 / JCM 1419 / IAM 19013 / LMG 5710 / NBRC 13948 / NRRL B-527 / VKM B-1787 / 2291 / W), this protein is Large ribosomal subunit protein uL15.